The primary structure comprises 156 residues: MAVLEIIKHPNEVLETPCERVINFDKKLVKLLKDMHETMLIADGVGLAAPQVGVSLQVAVVDVDDDTGKIELINPSILEKRGEQVGPEGCLSFPGLYGEVERADYIKVRAQNRRGKVFLLEAEGFLARAIQHEIDHLHGVLFTSKVTRYYEENELE.

Residues Cys90 and His132 each coordinate Fe cation. Glu133 is a catalytic residue. His136 is a Fe cation binding site.

The protein belongs to the polypeptide deformylase family. Fe(2+) is required as a cofactor.

It carries out the reaction N-terminal N-formyl-L-methionyl-[peptide] + H2O = N-terminal L-methionyl-[peptide] + formate. In terms of biological role, removes the formyl group from the N-terminal Met of newly synthesized proteins. Requires at least a dipeptide for an efficient rate of reaction. N-terminal L-methionine is a prerequisite for activity but the enzyme has broad specificity at other positions. This chain is Peptide deformylase 1, found in Bacillus cereus (strain ATCC 14579 / DSM 31 / CCUG 7414 / JCM 2152 / NBRC 15305 / NCIMB 9373 / NCTC 2599 / NRRL B-3711).